A 374-amino-acid chain; its full sequence is DNA replication and repair protein RecF (374 aa).

Position 30–37 (30–37 (GNNAQGKS)) interacts with ATP.

It belongs to the RecF family.

The protein resides in the cytoplasm. Functionally, the RecF protein is involved in DNA metabolism; it is required for DNA replication and normal SOS inducibility. RecF binds preferentially to single-stranded, linear DNA. It also seems to bind ATP. This Nostoc punctiforme (strain ATCC 29133 / PCC 73102) protein is DNA replication and repair protein RecF.